Consider the following 372-residue polypeptide: Cyclin-dependent kinase 9 (372 aa).

The region spanning 19–315 (YEKLAKIGQG…SDDALNHDFF (297 aa)) is the Protein kinase domain. Residue 25-33 (IGQGTFGEV) coordinates ATP. Lys-35 is modified (phosphoserine). The residue at position 44 (Lys-44) is an N6-acetyllysine; by EP300/CBP, PCAF/KAT2B and GCN5/KAT2A. Lys-48 is an ATP binding site. Position 48 is an N6-acetyllysine; by PCAF/KAT2B and GCN5/KAT2A (Lys-48). Asn-54 carries the post-translational modification Phosphothreonine. 104-106 (DFC) serves as a coordination point for ATP. Catalysis depends on Asp-149, which acts as the Proton acceptor. The tract at residues 166-191 (ADFGLARAFSLAKNSQPNRYTNRVVT) is T-loop. Asp-167 is a binding site for ATP. Position 175 is a phosphoserine (Ser-175). At Thr-186 the chain carries Phosphothreonine; by CaMK1D. Residues 343 to 372 (RRKGSQITQQSTNQSRNPATTNQTEFERVF) form a disordered region. Ser-347 carries the phosphoserine; by CDK9 and PKA modification. Positions 347-366 (SQITQQSTNQSRNPATTNQT) are enriched in polar residues. A Phosphothreonine; by CDK9 modification is found at Thr-350. Phosphoserine; by CDK9 is present on Ser-353. Thr-354 carries the post-translational modification Phosphothreonine; by CDK9. Ser-357 is modified (phosphoserine; by CDK9). Phosphothreonine; by CDK9 is present on residues Thr-362 and Thr-363.

The protein belongs to the protein kinase superfamily. CMGC Ser/Thr protein kinase family. CDC2/CDKX subfamily. In terms of assembly, component of the super elongation complex (SEC), at least composed of EAF1, EAF2, CDK9, MLLT3/AF9, AFF (AFF1 or AFF4), the P-TEFb complex and ELL (ELL, ELL2 or ELL3). Associates with CCNT1/cyclin-T1, CCNT2/cyclin-T2 (isoform A and isoform B) or CCNK/cyclin-K to form active P-TEFb. P-TEFb forms a complex with AFF4/AF5Q31 and is part of the super elongation complex (SEC). Component of a complex which is composed of at least 5 members: HTATSF1/Tat-SF1, P-TEFb complex, RNA pol II, SUPT5H and NCL/nucleolin. Associates with UBR5 and forms a transcription regulatory complex composed of CDK9, RNAP II, UBR5 and TFIIS/TCEA1 that can stimulate target gene transcription (e.g. gamma fibrinogen/FGG) by recruiting their promoters. Component of the 7SK snRNP inactive complex which is composed of at least 8 members: P-TEFb (composed of CDK9 and CCNT1/cyclin-T1), HEXIM1, HEXIM2, LARP7, BCDIN3, SART3 proteins and 7SK and U6 snRNAs. This inactive 7SK snRNP complex can also interact with NCOR1 and HDAC3, probably to regulate CDK9 acetylation. Release of P-TEFb from P-TEFb/7SK snRNP complex requires both PP2B to transduce calcium Ca(2+) signaling in response to stimuli (e.g. UV or hexamethylene bisacetamide (HMBA)) and PPP1CA to dephosphorylate Thr-186. This released P-TEFb remains inactive in the pre-initiation complex with BRD4 until new Thr-186 phosphorylation occurs after the synthesis of a short RNA. Interacts with BRD4; to target chromatin binding. Interacts with JMJD6. Interacts with activated nuclear STAT3 and RELA/p65. Binds to AR and MYOD1. Forms a complex composed of CDK9, CCNT1/cyclin-T1, EP300 and GATA4 that stimulates hypertrophy in cardiomyocytes. The large PER complex involved in the repression of transcriptional termination is composed of at least PER2, CDK9, DDX5, DHX9, NCBP1 and POLR2A. Interacts with HSF1. Interacts with TBX21. Isoform 3: binds to KU70/XRCC6. Interacts with WDR43. Interacts with ZMYND8; the association appears to occur between homodimeric ZMYND8 and the activated form of the P-TEFb complex. As to quaternary structure, (Microbial infection) Interacts with the acidic/proline-rich region of HIV-1 and HIV-2 Tat via T-loop region and is thus required for HIV to hijack host transcription machinery during its replication through cooperative binding to viral TAR RNA. (Microbial infection) Interacts with human herpes virus 1 (HHV-1) protein ICP22; this interaction blocks the recruitment of positive transcription elongation factor b (P-TEFb) to the viral promoter. Post-translationally, autophosphorylation at Thr-186, Ser-347, Thr-350, Ser-353, Thr-354 and Ser-357 triggers kinase activity by promoting cyclin and substrate binding (e.g. HIV TAT) upon conformational changes. Thr-186 phosphorylation requires the calcium Ca(2+) signaling pathway, including CaMK1D and calmodulin. This inhibition is relieved by Thr-29 dephosphorylation. However, phosphorylation at Thr-29 is inhibitory within the HIV transcription initiation complex. Phosphorylation at Ser-175 inhibits kinase activity. Can be phosphorylated on either Thr-362 or Thr-363 but not on both simultaneously. In terms of processing, dephosphorylation of Thr-186 by PPM1A and PPM1B blocks CDK9 activity and may lead to CDK9 proteasomal degradation. However, PPP1CA-mediated Thr-186 dephosphorylation is required to release P-TEFb from its inactive P-TEFb/7SK snRNP complex. Dephosphorylated at Ser-347 by the PNUTS-PP1 complex during RNA polymerase II transcription pause-release. Dephosphorylation of C-terminus Thr and Ser residues by protein phosphatase-1 (PP1) triggers CDK9 activity, contributing to the activation of HIV-1 transcription. N6-acetylation of Lys-44 promotes kinase activity, whereas acetylation of both Lys-44 and Lys-48 mediated by PCAF/KAT2B and GCN5/KAT2A reduces kinase activity. The acetylated form associates with PML bodies in the nuclear matrix and with the transcriptionally silent HIV-1 genome; deacetylated upon transcription stimulation. Deacetylated by SIRT7, promoting the kinase activity and subsequent 'Ser-2' phosphorylation of the C-terminal domain (CTD) of RNA polymerase II. Post-translationally, polyubiquitinated and thus activated by UBR5. This ubiquitination is promoted by TFIIS/TCEA1 and favors 'Ser-2' phosphorylation of RPB1/POLR2A CTD. As to expression, ubiquitous.

It is found in the nucleus. Its subcellular location is the cytoplasm. The protein localises to the PML body. The catalysed reaction is L-seryl-[protein] + ATP = O-phospho-L-seryl-[protein] + ADP + H(+). It catalyses the reaction L-threonyl-[protein] + ATP = O-phospho-L-threonyl-[protein] + ADP + H(+). The enzyme catalyses [DNA-directed RNA polymerase] + ATP = phospho-[DNA-directed RNA polymerase] + ADP + H(+). Its activity is regulated as follows. Inhibited by CDKI-71, CR8, GPC-286199, AG-024322, flavopiridol (alvocidib), RBG-286147, anilinopyrimidine 32, arylazopyrazole 31b, indirubin 3'-monoxime, meriolin 3,P276-00, olomoucine II, pyrazolotriazine, meriolin, variolin, thiazolyl-pyrimidine, thiazolyl-pyrimidine, indirubin-30-monoxime, ZK 304709, AG-012986, AT7519, R547, RGB-286638, imidazole pyrimidine, EXEL-3700, EXEL-8647, 5,6-dichloro-1-b-ribofur-anosyl-benzimidazole (DRB), P276-00, roscovitine (seliciclib, CYC202) and SNS-032 (BMS-387032). Activation by Thr-186 phosphorylation is calcium Ca(2+) signaling pathway-dependent; actively inactivated by dephosphorylation mediated by PPP1CA, PPM1A and PPM1B. Reversibly repressed by acetylation at Lys-44 and Lys-48. Functionally, protein kinase involved in the regulation of transcription. Member of the cyclin-dependent kinase pair (CDK9/cyclin-T) complex, also called positive transcription elongation factor b (P-TEFb), which facilitates the transition from abortive to productive elongation by phosphorylating the CTD (C-terminal domain) of the large subunit of RNA polymerase II (RNAP II) POLR2A, SUPT5H and RDBP. This complex is inactive when in the 7SK snRNP complex form. Phosphorylates EP300, MYOD1, RPB1/POLR2A and AR and the negative elongation factors DSIF and NELFE. Regulates cytokine inducible transcription networks by facilitating promoter recognition of target transcription factors (e.g. TNF-inducible RELA/p65 activation and IL-6-inducible STAT3 signaling). Promotes RNA synthesis in genetic programs for cell growth, differentiation and viral pathogenesis. P-TEFb is also involved in cotranscriptional histone modification, mRNA processing and mRNA export. Modulates a complex network of chromatin modifications including histone H2B monoubiquitination (H2Bub1), H3 lysine 4 trimethylation (H3K4me3) and H3K36me3; integrates phosphorylation during transcription with chromatin modifications to control co-transcriptional histone mRNA processing. The CDK9/cyclin-K complex has also a kinase activity towards CTD of RNAP II and can substitute for CDK9/cyclin-T P-TEFb in vitro. Replication stress response protein; the CDK9/cyclin-K complex is required for genome integrity maintenance, by promoting cell cycle recovery from replication arrest and limiting single-stranded DNA amount in response to replication stress, thus reducing the breakdown of stalled replication forks and avoiding DNA damage. In addition, probable function in DNA repair of isoform 2 via interaction with KU70/XRCC6. Promotes cardiac myocyte enlargement. RPB1/POLR2A phosphorylation on 'Ser-2' in CTD activates transcription. AR phosphorylation modulates AR transcription factor promoter selectivity and cell growth. DSIF and NELF phosphorylation promotes transcription by inhibiting their negative effect. The phosphorylation of MYOD1 enhances its transcriptional activity and thus promotes muscle differentiation. Catalyzes phosphorylation of KAT5, promoting KAT5 recruitment to chromatin and histone acetyltransferase activity. This chain is Cyclin-dependent kinase 9, found in Homo sapiens (Human).